Here is a 388-residue protein sequence, read N- to C-terminus: Processive diacylglycerol beta-glucosyltransferase (388 aa).

This sequence belongs to the glycosyltransferase 28 family. UgtP subfamily.

Its subcellular location is the cell membrane. The catalysed reaction is a 1,2-diacyl-3-O-(beta-D-glucopyranosyl)-sn-glycerol + UDP-alpha-D-glucose = a 1,2-diacyl-3-O-(beta-D-Glc-(1-&gt;6)-beta-D-Glc)-sn-glycerol + UDP + H(+). It carries out the reaction a 1,2-diacyl-3-O-(beta-D-Glc-(1-&gt;6)-beta-D-Glc)-sn-glycerol + UDP-alpha-D-glucose = a 1,2-diacyl-3-O-(beta-D-Glc-(1-&gt;6)-beta-D-Glc-(1-&gt;6)-beta-D-Glc)-sn-glycerol + UDP + H(+). It catalyses the reaction a 1,2-diacyl-sn-glycerol + UDP-alpha-D-glucose = a 1,2-diacyl-3-O-(beta-D-glucopyranosyl)-sn-glycerol + UDP + H(+). It participates in glycolipid metabolism; diglucosyl-diacylglycerol biosynthesis. In terms of biological role, processive glucosyltransferase involved in the biosynthesis of both the bilayer- and non-bilayer-forming membrane glucolipids. Is able to successively transfer up to three glucosyl residues to diacylglycerol (DAG), thereby catalyzing the formation of beta-monoglucosyl-DAG (3-O-(beta-D-glucopyranosyl)-1,2-diacyl-sn-glycerol), beta-diglucosyl-DAG (3-O-(beta-D-glucopyranosyl-beta-(1-&gt;6)-D-glucopyranosyl)-1,2-diacyl-sn-glycerol) and beta-triglucosyl-DAG (3-O-(beta-D-glucopyranosyl-beta-(1-&gt;6)-D-glucopyranosyl-beta-(1-&gt;6)-D-glucopyranosyl)-1,2-diacyl-sn-glycerol). Beta-diglucosyl-DAG is the predominant glycolipid found in Bacillales and is also used as a membrane anchor for lipoteichoic acid (LTA). The chain is Processive diacylglycerol beta-glucosyltransferase from Bacillus cereus (strain 03BB102).